The primary structure comprises 1132 residues: Rho GTPase-activating protein gacE (1132 aa).

The 187-residue stretch at Leu76–Phe262 folds into the Rho-GAP domain. 2 disordered regions span residues Asn279 to Ile354 and Asn472 to Asn517. The segment covering Leu281 to Thr301 has biased composition (low complexity). Over residues Ser302–Asp311 the composition is skewed to polar residues. Composition is skewed to low complexity over residues Ser328 to Ile354, Ser473 to Thr498, and Ser507 to Asn517.

It localises to the cytoplasm. In terms of biological role, rho GTPase-activating protein involved in the signal transduction pathway. This chain is Rho GTPase-activating protein gacE (gacE), found in Dictyostelium discoideum (Social amoeba).